A 400-amino-acid chain; its full sequence is Methylthioribose kinase (400 aa).

ATP contacts are provided by residues Asn-40, Lys-57, and 111-113 (EDL). Asp-229 serves as a coordination point for substrate. 246–248 (DAE) serves as a coordination point for ATP. Arg-344 contacts substrate.

The protein belongs to the methylthioribose kinase family. As to quaternary structure, homodimer.

It catalyses the reaction 5-(methylsulfanyl)-D-ribose + ATP = 5-(methylsulfanyl)-alpha-D-ribose 1-phosphate + ADP + H(+). Its pathway is amino-acid biosynthesis; L-methionine biosynthesis via salvage pathway; S-methyl-5-thio-alpha-D-ribose 1-phosphate from S-methyl-5'-thioadenosine (hydrolase route): step 2/2. Functionally, catalyzes the phosphorylation of methylthioribose into methylthioribose-1-phosphate. The chain is Methylthioribose kinase from Pectobacterium atrosepticum (strain SCRI 1043 / ATCC BAA-672) (Erwinia carotovora subsp. atroseptica).